Consider the following 367-residue polypeptide: MLSPQDRQDKLVRATDLDALSCKYSINRNLYLNPPDEFVKDLVESYQRYLQYCVGYTGLSSSRALKGLFQEKKMPIINRGSYLRTRAIDQVVNKFIGEFKDRCQIVSLGSGSDTRAFQIFKSHANVIYHEIDFPESAKVKKLAILQNPVIRELVGTNETSPLINNKEQFESYSSELHTEKYHLHGIDLRTLKKPDSQIKGFQPEVPTLVISECVLCYLSPDEYQRTMNYWTEIADQNYMGFLIYEPMSLNDQFGETMTLNLQSRGLNLQTFSKYPDLISRKKFLEESCHLKNLRLTDMSYIGGYKVRQDGREWIDHKEMGRINKLEMIDEIEEIRLLLEHYCLIYGEYTEEKTLNFKGIDTWSWILS.

S-adenosyl-L-methionine is bound by residues Arg-84, Gly-109, Asp-132, 187–188, and Glu-212; that span reads DL.

This sequence belongs to the methyltransferase superfamily. LCMT family.

The enzyme catalyses [phosphatase 2A protein]-C-terminal L-leucine + S-adenosyl-L-methionine = [phosphatase 2A protein]-C-terminal L-leucine methyl ester + S-adenosyl-L-homocysteine. Functionally, methylates the carboxyl group of the C-terminal leucine residue of protein phosphatase 2A catalytic subunits to form alpha-leucine ester residues. The polypeptide is Leucine carboxyl methyltransferase 1 (PPM1) (Candida albicans (strain SC5314 / ATCC MYA-2876) (Yeast)).